Consider the following 417-residue polypeptide: Monooxygenase cfoF (417 aa).

Residues Asp45–Lys48, Arg126, and Asp327 contribute to the FAD site. A compositionally biased stretch (basic and acidic residues) spans Ala389–Phe399. A disordered region spans residues Ala389 to Lys417.

The protein belongs to the aromatic-ring hydroxylase family. KMO subfamily. FAD serves as cofactor.

It participates in secondary metabolite biosynthesis; flavonoid biosynthesis. Monooxygenase; part of the gene cluster that mediates the biosynthesis of chlorflavonin, a fungal flavonoid with acetolactate synthase inhibitory activity. Within the pathway, cfoF is responsible for the hydroxylation of the flavonoid skeleton at position C3. The pathway begins with the PKS-NRPS hybrid synthetase cfoA that uses benzoic acid or p-hydroxybenzoic acid as a starter unit with four rounds of chain elongation using malonyl-CoA to form the chalcone skeleton. Then, a new type of chalcone isomerase, cfoK, catalyzes the conversion of the chalcone into a flavanone by a histidine-mediated oxa-Michael addition mechanism. The desaturation of flavanone to flavone is catalyzed by a new type of flavone synthase, the flavin mononucleotide (FMN)-dependent oxidoreductase cfoJ. Monooxygenases cfoF, cfoG, and P450 cfoH are responsible for the hydroxylation of the flavonoid skeleton at sites C3, C8, and C2', respectively. Like cfoF, the dehydratase cfoI plays also a role in the hydroxylation of position C3. Methyltransferases cfoB, cfoC, and cfoD then catalyze the methylation of C7-OH, C8-OH, and C3-OH, respectively. Finally, the monooxygenase cfoE is responsible for the chlorination of flavonoid at position C3'. The sequence is that of Monooxygenase cfoF from Aspergillus candidus.